The following is a 203-amino-acid chain: Outer-membrane lipoprotein carrier protein (203 aa).

The N-terminal stretch at 1-20 (MRRGRVWLAALCLAAGAAHA) is a signal peptide.

It belongs to the LolA family. Monomer.

It localises to the periplasm. Functionally, participates in the translocation of lipoproteins from the inner membrane to the outer membrane. Only forms a complex with a lipoprotein if the residue after the N-terminal Cys is not an aspartate (The Asp acts as a targeting signal to indicate that the lipoprotein should stay in the inner membrane). This chain is Outer-membrane lipoprotein carrier protein, found in Methylibium petroleiphilum (strain ATCC BAA-1232 / LMG 22953 / PM1).